A 349-amino-acid chain; its full sequence is Sphingomyelinase D (349 aa).

Residues 1 to 18 (MLLSSLISLALLSSQVVA) form the signal peptide. His52 is a catalytic residue. Mg(2+) contacts are provided by Glu72, Asp74, and Asp123. The SMD-tail signature appears at 310–317 (ATNDNNPW).

The protein belongs to the sphingomyelinase D/phospholipase D family. Mg(2+) is required as a cofactor.

It is found in the secreted. It catalyses the reaction a sphingomyelin + H2O = an N-acylsphing-4-enine 1-phosphate + choline + H(+). Its function is as follows. Catalyzes the hydrolysis of sphingomyelin. Sphingomyelinases D are produced by some spider in their venoms, but also by arthropods such as ticks, or pathogenic bacteria and fungi. They might play a role in pathogenicity through different mechanisms, such as membrane destabilization and host cell penetration, but also pulmonary inflammation and cutaneous lesions. This Uncinocarpus reesii (strain UAMH 1704) protein is Sphingomyelinase D.